Consider the following 105-residue polypeptide: Phosphoribosyl-ATP pyrophosphatase (105 aa).

Belongs to the PRA-PH family.

It is found in the cytoplasm. It carries out the reaction 1-(5-phospho-beta-D-ribosyl)-ATP + H2O = 1-(5-phospho-beta-D-ribosyl)-5'-AMP + diphosphate + H(+). It functions in the pathway amino-acid biosynthesis; L-histidine biosynthesis; L-histidine from 5-phospho-alpha-D-ribose 1-diphosphate: step 2/9. This is Phosphoribosyl-ATP pyrophosphatase from Ruegeria sp. (strain TM1040) (Silicibacter sp.).